The chain runs to 507 residues: MKVLDLLTVLSASSLLSTFAAAESTATADSTTAASSTASCNPLKTTGCTPDTALATSFSEDFSSSSKWFTDLKHAGEIKYGSDGLSMTLAKRYDNPSLKSNFYIMYGKLEVILKAANGTGIVSSFYLQSDDLDEIDIEWVGGDNTQFQSNFFSKGDTTTYDRGEFHGVDTPTDKFHNYTLDWAMDKTTWYLDGESVRVLSNTSSEGYPQSPMYLMMGIWAGGDPDNAAGTIEWAGGETNYNDAPFTMYIEKVIVTDYSTGKKYTYGDQSGSWESIEADGGSIYGRYDQAQEDFAVLANGGSISSSSTSSSTVSSSASSTVSSSVSSTVSSSASSTVSSSVSSTVSSSSSVSSSSSTSPSSSTATSSKTLASSSVTTSSSISSFEKQSSSSSKKTVASSSTSESIISSTKTPATVSSTTRSTVAPTTQQSSVSSDSPVQDKGGVATSSNDVTSSTTQISSKYTSTIQSSSSEASSTNSVQISNGADLAQSLPREGKLFSVLVALLALL.

The signal sequence occupies residues 1-22 (MKVLDLLTVLSASSLLSTFAAA). Positions 34–260 (ASSTASCNPL…KVIVTDYSTG (227 aa)) constitute a GH16 domain. Cysteines 40 and 48 form a disulfide. Asn117 carries N-linked (GlcNAc...) asparagine glycosylation. Glu134 serves as the catalytic Nucleophile. The active-site Proton donor is the Glu138. Glu138 serves as a coordination point for chitin. Residues Asn177 and Asn201 are each glycosylated (N-linked (GlcNAc...) asparagine). Residues Trp219 and Thr230 each contribute to the chitin site. Disordered stretches follow at residues 329–368 (SSSA…SSKT) and 381–478 (SSFE…TNSV). 2 stretches are compositionally biased toward low complexity: residues 381 to 439 (SSFE…PVQD) and 451 to 477 (TSST…STNS). Asn482 carries GPI-anchor amidated asparagine lipidation. The propeptide at 483-507 (GADLAQSLPREGKLFSVLVALLALL) is removed in mature form.

The protein belongs to the glycosyl hydrolase 16 family. CRH1 subfamily. In terms of processing, the GPI-anchor is attached to the protein in the endoplasmic reticulum and serves to target the protein to the cell surface. There, the glucosamine-inositol phospholipid moiety is cleaved off and the GPI-modified mannoprotein is covalently attached via its lipidless GPI glycan remnant to the 1,6-beta-glucan of the outer cell wall layer.

Its subcellular location is the secreted. It is found in the cell wall. It localises to the membrane. It catalyses the reaction Random endo-hydrolysis of N-acetyl-beta-D-glucosaminide (1-&gt;4)-beta-linkages in chitin and chitodextrins.. Dual chitinase/transglycosylase that plays a role in cell wall architecture. Chitinase and transglycosylase activities are coupled. Required for the polysaccharide cross-linking at the septa and the cell wall. More specifically, transfers chitin to both beta(1-3)- and beta(1-6)glucan in the cell wall. The minimal number of intact hexopyranose units required in the molecule of the acceptor oligosaccharide is two and the effectivity of the acceptor increased with the increasing length of its oligosaccharide chain. The polypeptide is Congo red hypersensitive protein 1 (Saccharomyces cerevisiae (strain ATCC 204508 / S288c) (Baker's yeast)).